A 205-amino-acid chain; its full sequence is Guanylate kinase (205 aa).

The Guanylate kinase-like domain occupies 5-183 (GTLYTVSAPS…ALTEFRSIVV (179 aa)). 12–19 (APSGAGKT) is a binding site for ATP.

This sequence belongs to the guanylate kinase family.

It localises to the cytoplasm. It catalyses the reaction GMP + ATP = GDP + ADP. Essential for recycling GMP and indirectly, cGMP. This is Guanylate kinase from Saccharophagus degradans (strain 2-40 / ATCC 43961 / DSM 17024).